The sequence spans 532 residues: Cytokinin dehydrogenase 8 (532 aa).

Residues 1-26 (MELKAMYLYAAVLAVLLCSSVNFIQS) form the signal peptide. Positions 51-238 (VSDAPFAVMR…TRARIPLQLA (188 aa)) constitute an FAD-binding PCMH-type domain. Residues alanine 87, glycine 89, and glycine 91 each contribute to the FAD site. Pros-8alpha-FAD histidine is present on histidine 92. FAD contacts are provided by serine 93, glutamine 97, aspartate 162, threonine 167, serine 173, isoleucine 177, and isoleucine 228. Asparagine 420 carries an N-linked (GlcNAc...) asparagine glycan. Positions 482 and 520 each coordinate FAD.

The protein belongs to the oxygen-dependent FAD-linked oxidoreductase family. Monomer. Requires FAD as cofactor.

Its subcellular location is the secreted. The protein resides in the extracellular space. It carries out the reaction N(6)-dimethylallyladenine + A + H2O = 3-methyl-2-butenal + adenine + AH2. In terms of biological role, catalyzes the oxidation of cytokinins, a family of N(6)-substituted adenine derivatives that are plant hormones, where the substituent is an isopentenyl group. This Oryza sativa subsp. indica (Rice) protein is Cytokinin dehydrogenase 8 (CKX8).